The chain runs to 413 residues: MKPRVLGMILAGGQGSRLAPLTQKRSKPSVPFGSKYRIIDFAINNFMNSGVFSIYVLTQYKAQSLTEHIQRGWRFGTFLSDYFITLVPAQMYRYEELGAVWYRGTADAVYQNMHLIDNFDADYVAIFSGDHIYKMNVEHMLEKHIESRADVTIAAYPMPRSQAHQFGVMQVDAGWRVTEFLEKVPDPPGLPENPDLSLTSMGNYIFSRRALEELLHTSISGQEDGFDFGHNVIPRALADGYHVQAYDFHRNPIPGQSNPNLYWRDVGTIDAYYEANMDLISINPEFDIYNPSWPLRTSSEFSPPAKFVHESDGRKGQAFNSVMAGGVIISGATVRDSVLGRNIRAHSYALIESCVLFDDVEVGRHSHLNRAIVDKNVKIPPGTKIGVDHDHDRERGFTVTESGVVVVPKSYTF.

Residues tyrosine 102, glycine 167, 182-183 (EK), and serine 200 contribute to the alpha-D-glucose 1-phosphate site.

This sequence belongs to the bacterial/plant glucose-1-phosphate adenylyltransferase family. In terms of assembly, homotetramer.

The enzyme catalyses alpha-D-glucose 1-phosphate + ATP + H(+) = ADP-alpha-D-glucose + diphosphate. Its pathway is glycan biosynthesis; glycogen biosynthesis. Its function is as follows. Involved in the biosynthesis of ADP-glucose, a building block required for the elongation reactions to produce glycogen. Catalyzes the reaction between ATP and alpha-D-glucose 1-phosphate (G1P) to produce pyrophosphate and ADP-Glc. This Deinococcus deserti (strain DSM 17065 / CIP 109153 / LMG 22923 / VCD115) protein is Glucose-1-phosphate adenylyltransferase.